A 66-amino-acid chain; its full sequence is Sec-independent protein translocase protein TatA (66 aa).

A helical transmembrane segment spans residues 1–21 (MIGGLGMPELIIILVIILIIF). Residues 45 to 66 (RDAELNEGDKDDKEKEQEKLDK) are disordered.

It belongs to the TatA/E family. The Tat system comprises two distinct complexes: a TatABC complex, containing multiple copies of TatA, TatB and TatC subunits, and a separate TatA complex, containing only TatA subunits. Substrates initially bind to the TatABC complex, which probably triggers association of the separate TatA complex to form the active translocon.

Its subcellular location is the cell inner membrane. Part of the twin-arginine translocation (Tat) system that transports large folded proteins containing a characteristic twin-arginine motif in their signal peptide across membranes. TatA could form the protein-conducting channel of the Tat system. This Desulforapulum autotrophicum (strain ATCC 43914 / DSM 3382 / VKM B-1955 / HRM2) (Desulfobacterium autotrophicum) protein is Sec-independent protein translocase protein TatA.